Here is a 178-residue protein sequence, read N- to C-terminus: Gamma-crystallin M1 (178 aa).

2 Beta/gamma crystallin 'Greek key' domains span residues 2–40 (GKIIFYDDRNFQGRSYDCMSDCSDISSYLSRVGSIRVES) and 41–86 (GCFM…RMIP). A connecting peptide region spans residues 87–91 (PYRGS). Beta/gamma crystallin 'Greek key' domains follow at residues 92 to 132 (YRMR…HVMD) and 133 to 175 (GHWL…RRIT).

This sequence belongs to the beta/gamma-crystallin family. As to quaternary structure, monomer.

Its function is as follows. Crystallins are the dominant structural components of the vertebrate eye lens. This is Gamma-crystallin M1 from Cyprinus carpio (Common carp).